A 186-amino-acid chain; its full sequence is Pyridoxal 5'-phosphate synthase subunit PdxT (186 aa).

46–48 (GES) contacts L-glutamine. The active-site Nucleophile is C75. L-glutamine is bound by residues R101 and 127–128 (IR). Active-site charge relay system residues include H164 and E166.

It belongs to the glutaminase PdxT/SNO family. In the presence of PdxS, forms a dodecamer of heterodimers. Only shows activity in the heterodimer.

The enzyme catalyses aldehydo-D-ribose 5-phosphate + D-glyceraldehyde 3-phosphate + L-glutamine = pyridoxal 5'-phosphate + L-glutamate + phosphate + 3 H2O + H(+). It carries out the reaction L-glutamine + H2O = L-glutamate + NH4(+). Its pathway is cofactor biosynthesis; pyridoxal 5'-phosphate biosynthesis. Its function is as follows. Catalyzes the hydrolysis of glutamine to glutamate and ammonia as part of the biosynthesis of pyridoxal 5'-phosphate. The resulting ammonia molecule is channeled to the active site of PdxS. The chain is Pyridoxal 5'-phosphate synthase subunit PdxT from Methanococcus aeolicus (strain ATCC BAA-1280 / DSM 17508 / OCM 812 / Nankai-3).